Here is a 161-residue protein sequence, read N- to C-terminus: 2-C-methyl-D-erythritol 2,4-cyclodiphosphate synthase (161 aa).

2 residues coordinate a divalent metal cation: D10 and H12. Residues 10-12 (DVH) and 36-37 (HS) contribute to the 4-CDP-2-C-methyl-D-erythritol 2-phosphate site. Residue H44 participates in a divalent metal cation binding. 4-CDP-2-C-methyl-D-erythritol 2-phosphate contacts are provided by residues 58-60 (DIG), 63-67 (FSDTD), and R144.

This sequence belongs to the IspF family. As to quaternary structure, homotrimer. A divalent metal cation serves as cofactor.

It carries out the reaction 4-CDP-2-C-methyl-D-erythritol 2-phosphate = 2-C-methyl-D-erythritol 2,4-cyclic diphosphate + CMP. It participates in isoprenoid biosynthesis; isopentenyl diphosphate biosynthesis via DXP pathway; isopentenyl diphosphate from 1-deoxy-D-xylulose 5-phosphate: step 4/6. Functionally, involved in the biosynthesis of isopentenyl diphosphate (IPP) and dimethylallyl diphosphate (DMAPP), two major building blocks of isoprenoid compounds. Catalyzes the conversion of 4-diphosphocytidyl-2-C-methyl-D-erythritol 2-phosphate (CDP-ME2P) to 2-C-methyl-D-erythritol 2,4-cyclodiphosphate (ME-CPP) with a corresponding release of cytidine 5-monophosphate (CMP). This chain is 2-C-methyl-D-erythritol 2,4-cyclodiphosphate synthase, found in Burkholderia ambifaria (strain ATCC BAA-244 / DSM 16087 / CCUG 44356 / LMG 19182 / AMMD) (Burkholderia cepacia (strain AMMD)).